A 36-amino-acid polypeptide reads, in one-letter code: GPSQPTYPGDDAPVEDLIRFYNDLQQYLNVVTRHRY.

Tyrosine 36 carries the post-translational modification Tyrosine amide.

It belongs to the NPY family.

The protein resides in the secreted. In terms of biological role, hormone secreted by pancreatic cells that acts as a regulator of pancreatic and gastrointestinal functions. The sequence is that of Pancreatic polypeptide (PPY) from Meleagris gallopavo (Wild turkey).